A 417-amino-acid polypeptide reads, in one-letter code: S-inosyl-L-homocysteine hydrolase (417 aa).

Asp-124 and Glu-149 together coordinate substrate. Residue 150-152 (TTT) participates in NAD(+) binding. Residues Lys-179 and Asp-183 each contribute to the substrate site. Residues Asn-184, 213–218 (GYGWCG), Glu-236, Asn-271, 292–294 (SGH), and Asn-339 each bind NAD(+).

The protein belongs to the adenosylhomocysteinase family. It depends on NAD(+) as a cofactor.

The protein resides in the cytoplasm. The catalysed reaction is S-inosyl-L-homocysteine + H2O = L-homocysteine + inosine. The protein operates within amino-acid biosynthesis; S-adenosyl-L-methionine biosynthesis. Catalyzes the hydrolysis of S-inosyl-L-homocysteine (SIH) to L-homocysteine (Hcy) and inosine. Likely functions in a S-adenosyl-L-methionine (SAM) recycling pathway from S-adenosyl-L-homocysteine (SAH) produced from SAM-dependent methylation reactions. Can also catalyze the reverse reaction in vitro, i.e. the synthesis of SIH from Hcy and inosine. The polypeptide is S-inosyl-L-homocysteine hydrolase (Methanothermobacter thermautotrophicus (strain ATCC 29096 / DSM 1053 / JCM 10044 / NBRC 100330 / Delta H) (Methanobacterium thermoautotrophicum)).